The sequence spans 137 residues: Sch210972 biosynthesis cluster protein E (137 aa).

The segment covering 1 to 12 (MTKYTSVNSSLP) has biased composition (polar residues). Residues 1–137 (MTKYTSVNSS…ASTIRPPCCG (137 aa)) are disordered. Over residues 15-27 (PRQTTPTRPATQT) the composition is skewed to low complexity. Polar residues predominate over residues 51–71 (GSLNGSPTLRTTLDTSLSGTR). Positions 94 to 109 (DEDHPHDPGPDSDAKK) are enriched in basic and acidic residues.

The protein operates within secondary metabolite biosynthesis. Its function is as follows. Part of the gene cluster that mediates the biosynthesis of the tetramic acid Sch210972, a potential anti-HIV fungal natural product that contains a decalin core. The PKS module of cghG together with the enoylreductase cghC catalyze the formation of the polyketide unit which is then conjugated to 4-hydroxyl-4-methyl glutamate (HMG) by the condensation domain of the cghG NRPS module. One unique structural feature of Sch210972 is the tetramic acid motif proposed to be derived from the non-proteinogenic amino acid HMG, by a Dieckmann-type condensation catalyzed by the reductase domain of cghG. The aldolase cghB catalyzes the aldol condensation of 2 molecules of pyruvic acid to yield the intermediate 4-hydroxyl-4-methyl-2-oxoglutarate (HMOG), which can then be stereoselectively transaminated by an unidentified enzyme to form HMG. The Diels-Alderase cghA then uses the Dieckmann product released by cghG as substrate and catalyzes the Diels-Alder cycloaddition to form the decalin ring of Sch210972. CghA also suppresses the nonenzymatic formation of the alternative stereoisomer. The chain is Sch210972 biosynthesis cluster protein E from Chaetomium globosum (strain ATCC 6205 / CBS 148.51 / DSM 1962 / NBRC 6347 / NRRL 1970) (Soil fungus).